A 222-amino-acid polypeptide reads, in one-letter code: Glutathione S-transferase U21 (222 aa).

Positions 3 to 83 (AEVILLGFWP…YIDEVWSDNN (81 aa)) constitute a GST N-terminal domain. Residues 13–14 (SM), 40–41 (NK), 54–55 (TI), and 67–68 (ES) each bind glutathione. The region spanning 89 to 211 (DPYHRAQALF…LPDSEKVVGY (123 aa)) is the GST C-terminal domain.

The protein belongs to the GST superfamily. Tau family.

It localises to the cytoplasm. Its subcellular location is the cytosol. The enzyme catalyses RX + glutathione = an S-substituted glutathione + a halide anion + H(+). Functionally, may be involved in the conjugation of reduced glutathione to a wide number of exogenous and endogenous hydrophobic electrophiles and have a detoxification role against certain herbicides. The chain is Glutathione S-transferase U21 (GSTU21) from Arabidopsis thaliana (Mouse-ear cress).